The primary structure comprises 161 residues: Large ribosomal subunit protein uL29c (161 aa).

A chloroplast-targeting transit peptide spans 1 to 61 (MATMSLAAAS…ERRAAAMVAM (61 aa)).

Belongs to the universal ribosomal protein uL29 family. In terms of assembly, part of the 50S ribosomal subunit.

Its subcellular location is the plastid. It localises to the chloroplast. This chain is Large ribosomal subunit protein uL29c (RPL29), found in Zea mays (Maize).